Reading from the N-terminus, the 63-residue chain is DNA-directed RNA polymerase 7 kDa subunit (63 aa).

Belongs to the poxviridae DNA-directed RNA polymerase 7 kDa subunit family. In terms of assembly, the DNA-dependent RNA polymerase (vRNAP) consists of eight subunits encoded by early viral genes and termed according to their apparent molecular masses Rpo147, Rpo132, Rpo35, Rpo30, Rpo22, Rpo19, Rpo18, and Rpo7. The same holoenzyme, with the addition of the transcription-specificity factor RAP94, is used for early gene expression.

It localises to the virion. The enzyme catalyses RNA(n) + a ribonucleoside 5'-triphosphate = RNA(n+1) + diphosphate. Functionally, part of the DNA-dependent RNA polymerase which catalyzes the transcription of viral DNA into RNA using the four ribonucleoside triphosphates as substrates. Responsible for the transcription of early, intermediate and late genes. DNA-dependent RNA polymerase associates with the early transcription factor (ETF), itself composed of OPG118 and OPG134, thereby allowing the early genes transcription. Late transcription, and probably also intermediate transcription, require newly synthesized RNA polymerase. This is DNA-directed RNA polymerase 7 kDa subunit (OPG090) from Homo sapiens (Human).